Reading from the N-terminus, the 142-residue chain is Large ribosomal subunit protein uL11 (142 aa).

The protein belongs to the universal ribosomal protein uL11 family. Part of the ribosomal stalk of the 50S ribosomal subunit. Interacts with L10 and the large rRNA to form the base of the stalk. L10 forms an elongated spine to which L12 dimers bind in a sequential fashion forming a multimeric L10(L12)X complex. In terms of processing, one or more lysine residues are methylated.

In terms of biological role, forms part of the ribosomal stalk which helps the ribosome interact with GTP-bound translation factors. The sequence is that of Large ribosomal subunit protein uL11 from Dictyoglomus turgidum (strain DSM 6724 / Z-1310).